The sequence spans 666 residues: Endogenous retrovirus group K member 7 Gag polyprotein (666 aa).

Residue glycine 2 is the site of N-myristoyl glycine attachment. Disordered stretches follow at residues 165–205 (GKGP…NKTQ) and 217–264 (ELQY…GSEL). The span at 232-247 (GMPPAPQGRAPYPQPP) shows a compositional bias: pro residues. 2 consecutive CCHC-type zinc fingers follow at residues 544–561 (GKCY…NCPV) and 580–597 (DLCP…QCRS). The segment at 598–641 (KFDKNGQPLSGNEQRGQPQAPQQTGAFPIQPFVPQGFQEQQPPL) is disordered. Positions 604–622 (QPLSGNEQRGQPQAPQQTG) are enriched in polar residues.

Belongs to the beta type-B retroviral Gag protein family. HERV class-II K(HML-2) gag subfamily. Specific enzymatic cleavages may yield mature proteins. In terms of processing, myristoylation is essential for retroviral assembly. Alteration of the glycine residue leads to a block in the budding of particles and an accumulation of Gag inside the cell.

The protein resides in the cell membrane. The products of the Gag polyproteins of infectious retroviruses perform highly complex orchestrated tasks during the assembly, budding, maturation, and infection stages of the viral replication cycle. During viral assembly, the proteins form membrane associations and self-associations that ultimately result in budding of an immature virion from the infected cell. Gag precursors also function during viral assembly to selectively bind and package two plus strands of genomic RNA. Endogenous Gag proteins may have kept, lost or modified their original function during evolution. This Homo sapiens (Human) protein is Endogenous retrovirus group K member 7 Gag polyprotein (ERVK-7).